The sequence spans 143 residues: Heat shock protein 16 (143 aa).

The sHSP domain maps to 30-143 (QIPGELSPSI…SQTKKQIAIK (114 aa)).

It belongs to the small heat shock protein (HSP20) family.

It is found in the cytoplasm. The protein localises to the nucleus. The chain is Heat shock protein 16 (hsp16) from Schizosaccharomyces pombe (strain 972 / ATCC 24843) (Fission yeast).